The primary structure comprises 89 residues: Small ribosomal subunit protein uS15 (89 aa).

Belongs to the universal ribosomal protein uS15 family. As to quaternary structure, part of the 30S ribosomal subunit. Forms a bridge to the 50S subunit in the 70S ribosome, contacting the 23S rRNA.

In terms of biological role, one of the primary rRNA binding proteins, it binds directly to 16S rRNA where it helps nucleate assembly of the platform of the 30S subunit by binding and bridging several RNA helices of the 16S rRNA. Functionally, forms an intersubunit bridge (bridge B4) with the 23S rRNA of the 50S subunit in the ribosome. The polypeptide is Small ribosomal subunit protein uS15 (Shewanella baltica (strain OS223)).